Reading from the N-terminus, the 706-residue chain is Elongation factor G (706 aa).

Residues 12–288 (EKTRNIGIMA…GVTNYLPSPN (277 aa)) enclose the tr-type G domain. Residues 21 to 28 (AHIDAGKT), 85 to 89 (DTPGH), and 139 to 142 (NKMD) contribute to the GTP site. A disordered region spans residues 288-309 (NDVPAITGHHPQDKEEDITRHP). A compositionally biased stretch (basic and acidic residues) spans 297-309 (HPQDKEEDITRHP).

Belongs to the TRAFAC class translation factor GTPase superfamily. Classic translation factor GTPase family. EF-G/EF-2 subfamily.

The protein resides in the cytoplasm. Functionally, catalyzes the GTP-dependent ribosomal translocation step during translation elongation. During this step, the ribosome changes from the pre-translocational (PRE) to the post-translocational (POST) state as the newly formed A-site-bound peptidyl-tRNA and P-site-bound deacylated tRNA move to the P and E sites, respectively. Catalyzes the coordinated movement of the two tRNA molecules, the mRNA and conformational changes in the ribosome. This is Elongation factor G from Salinibacter ruber (strain DSM 13855 / M31).